Reading from the N-terminus, the 445-residue chain is MSNRKYFGTDGIRGRVGDAPITPEFVLKLGWAAGKVLARHGSRKIIIGKDTRISGYMLESALEAGLAAAGLSASFTGPMPTPAIAYLTRAFRAEAGIVISASHNPFYDNGIKFFSIEGTKLPDDVEEAIEAEMEKELTCVDSAELGKASRIVDAAGRYIEFCKGTFPNELSLGTLKVVVDCAHGATYHIAPNVFRELGAQVIAMGCEPDGLNINEEVGATDVRALQARVLAEKADLGIAYDGDGDRVIMVDHEGNKVDGDQILYIIAREGLRQGQLRGGAVGTLMSNMGLELALKQLGIPFARAKVGDRYVLEMLQEKGWRIGAENSGHVILLDKTTTGDGIVASLQVVAAMVRNHMSLHDLCSGMKMFPQLLVNVRFTEGSGNPLENEHVKAVTAEVEAALGKRGRVLLRKSGTEPLIRVMVEGEHEDQVHEFAHRIAEAVKSV.

Ser102 serves as the catalytic Phosphoserine intermediate. Mg(2+) is bound by residues Ser102, Asp241, Asp243, and Asp245. Phosphoserine is present on Ser102.

The protein belongs to the phosphohexose mutase family. Mg(2+) is required as a cofactor. Activated by phosphorylation.

The catalysed reaction is alpha-D-glucosamine 1-phosphate = D-glucosamine 6-phosphate. Catalyzes the conversion of glucosamine-6-phosphate to glucosamine-1-phosphate. The sequence is that of Phosphoglucosamine mutase from Klebsiella pneumoniae (strain 342).